The sequence spans 367 residues: DNA replication and repair protein RecF (367 aa).

Residue 30–37 coordinates ATP; sequence GANGSGKT.

Belongs to the RecF family.

The protein resides in the cytoplasm. Its function is as follows. The RecF protein is involved in DNA metabolism; it is required for DNA replication and normal SOS inducibility. RecF binds preferentially to single-stranded, linear DNA. It also seems to bind ATP. This is DNA replication and repair protein RecF from Pseudomonas fluorescens (strain Pf0-1).